Reading from the N-terminus, the 103-residue chain is Large ribosomal subunit protein uL24 (103 aa).

It belongs to the universal ribosomal protein uL24 family. Part of the 50S ribosomal subunit.

One of two assembly initiator proteins, it binds directly to the 5'-end of the 23S rRNA, where it nucleates assembly of the 50S subunit. In terms of biological role, one of the proteins that surrounds the polypeptide exit tunnel on the outside of the subunit. The chain is Large ribosomal subunit protein uL24 from Mannheimia succiniciproducens (strain KCTC 0769BP / MBEL55E).